Reading from the N-terminus, the 291-residue chain is Transcription factor bHLH53 (291 aa).

Residues 163-212 form the bHLH domain; the sequence is PTLSSQSIAARGRRRRIAEKTHELGKLIPGGNKLNTAEMFQAAAKYVKFL.

In terms of assembly, homodimer. In terms of tissue distribution, expressed constitutively in roots, leaves, stems, and flowers.

Its subcellular location is the nucleus. The chain is Transcription factor bHLH53 (BHLH53) from Arabidopsis thaliana (Mouse-ear cress).